Here is a 576-residue protein sequence, read N- to C-terminus: Protein NRT1/ PTR FAMILY 2.12 (576 aa).

The next 11 membrane-spanning stretches (helical) occupy residues 58 to 78 (FNVY…GALI), 89 to 109 (IAYA…TACL), 130 to 150 (KLQL…SGGI), 176 to 196 (FFNW…TVVV), 203 to 223 (WVIG…LFFV), 329 to 349 (VWSA…FMVF), 364 to 384 (IPAA…VPIY), 406 to 426 (MGIG…VEGV), 441 to 461 (WLAL…IGLI), 475 to 495 (IANS…SLLV), and 522 to 542 (YFYY…WYCA).

Belongs to the major facilitator superfamily. Proton-dependent oligopeptide transporter (POT/PTR) (TC 2.A.17) family. Expressed in flowers and siliques. Expressed in vascular bundle of the siliques and in funiculus.

It is found in the cell membrane. Functionally, low-affinity proton-dependent nitrate transporter. Not involved in dipeptides transport. Involved in delivering nitrate for seed development. This chain is Protein NRT1/ PTR FAMILY 2.12 (NPF2.12), found in Arabidopsis thaliana (Mouse-ear cress).